A 29-amino-acid polypeptide reads, in one-letter code: MDIVNIAWAALMVVSTFSLTLVVWGRSGL.

Residues 3–23 (IVNIAWAALMVVSTFSLTLVV) form a helical membrane-spanning segment.

This sequence belongs to the PetN family. In terms of assembly, the 4 large subunits of the cytochrome b6-f complex are cytochrome b6, subunit IV (17 kDa polypeptide, PetD), cytochrome f and the Rieske protein, while the 4 small subunits are PetG, PetL, PetM and PetN. The complex functions as a dimer.

Its subcellular location is the plastid. It localises to the chloroplast thylakoid membrane. Its function is as follows. Component of the cytochrome b6-f complex, which mediates electron transfer between photosystem II (PSII) and photosystem I (PSI), cyclic electron flow around PSI, and state transitions. This chain is Cytochrome b6-f complex subunit 8, found in Huperzia lucidula (Shining clubmoss).